We begin with the raw amino-acid sequence, 472 residues long: 3-isopropylmalate dehydratase large subunit (472 aa).

[4Fe-4S] cluster contacts are provided by cysteine 347, cysteine 407, and cysteine 410.

This sequence belongs to the aconitase/IPM isomerase family. LeuC type 1 subfamily. In terms of assembly, heterodimer of LeuC and LeuD. The cofactor is [4Fe-4S] cluster.

It carries out the reaction (2R,3S)-3-isopropylmalate = (2S)-2-isopropylmalate. It functions in the pathway amino-acid biosynthesis; L-leucine biosynthesis; L-leucine from 3-methyl-2-oxobutanoate: step 2/4. Its function is as follows. Catalyzes the isomerization between 2-isopropylmalate and 3-isopropylmalate, via the formation of 2-isopropylmaleate. The protein is 3-isopropylmalate dehydratase large subunit of Bacillus subtilis (strain 168).